Consider the following 399-residue polypeptide: Imidazolonepropionase (399 aa).

Residues His68 and His70 each contribute to the Fe(3+) site. Residues His68 and His70 each coordinate Zn(2+). 4-imidazolone-5-propanoate is bound by residues Arg77, Tyr140, and His173. Tyr140 provides a ligand contact to N-formimidoyl-L-glutamate. His238 contributes to the Fe(3+) binding site. A Zn(2+)-binding site is contributed by His238. Gln241 is a 4-imidazolone-5-propanoate binding site. Residue Asp313 coordinates Fe(3+). Residue Asp313 participates in Zn(2+) binding. The N-formimidoyl-L-glutamate site is built by Asn315 and Gly317. Position 318 (Thr318) interacts with 4-imidazolone-5-propanoate.

Belongs to the metallo-dependent hydrolases superfamily. HutI family. It depends on Zn(2+) as a cofactor. Requires Fe(3+) as cofactor.

It is found in the cytoplasm. It carries out the reaction 4-imidazolone-5-propanoate + H2O = N-formimidoyl-L-glutamate. The protein operates within amino-acid degradation; L-histidine degradation into L-glutamate; N-formimidoyl-L-glutamate from L-histidine: step 3/3. Its function is as follows. Catalyzes the hydrolytic cleavage of the carbon-nitrogen bond in imidazolone-5-propanoate to yield N-formimidoyl-L-glutamate. It is the third step in the universal histidine degradation pathway. The sequence is that of Imidazolonepropionase from Rhizorhabdus wittichii (strain DSM 6014 / CCUG 31198 / JCM 15750 / NBRC 105917 / EY 4224 / RW1) (Sphingomonas wittichii).